A 94-amino-acid polypeptide reads, in one-letter code: Large ribosomal subunit protein uL22 (94 aa).

It belongs to the universal ribosomal protein uL22 family. In terms of assembly, part of the 50S ribosomal subunit.

Functionally, this protein binds specifically to 23S rRNA; its binding is stimulated by other ribosomal proteins, e.g. L4, L17, and L20. It is important during the early stages of 50S assembly. It makes multiple contacts with different domains of the 23S rRNA in the assembled 50S subunit and ribosome. The globular domain of the protein is located near the polypeptide exit tunnel on the outside of the subunit, while an extended beta-hairpin is found that lines the wall of the exit tunnel in the center of the 70S ribosome. The chain is Large ribosomal subunit protein uL22 (rplV) from Tomato big bud phytoplasma.